The sequence spans 1343 residues: uncharacterized protein (1343 aa).

The chain crosses the membrane as a helical span at residues 432-449 (LYVYFVTTKTGVVAFSLL).

The protein belongs to the IIV-6 295L family.

Its subcellular location is the membrane. This is an uncharacterized protein from Acheta domesticus (House cricket).